The sequence spans 184 residues: QLLQFAADVATGMHYLSDKQFIHRDLAARNVLVGDNLVAKIADFGLSRGEEVYVKKTMGRLPVRWMAIESLNYSVYTTKSDVWSFGVLLWEIVSLGGTPYCGMTCAELYEKLPQGYRMEQPRNCDDEVYELMRQCWRDRPYERPPFSQISVQLNRMQEARKAYVNMALFENFTYAGIDATAEEA.

The 164-residue stretch at 1 to 164 folds into the Protein kinase domain; the sequence is QLLQFAADVA…RMQEARKAYV (164 aa). Aspartate 25 acts as the Proton acceptor in catalysis. Residue tyrosine 53 is modified to Phosphotyrosine; by autocatalysis.

This sequence belongs to the protein kinase superfamily. Tyr protein kinase family. Tie subfamily. As to quaternary structure, interacts with svep1. Expressed in most populations of endothelial cells in 24 hours embryos, including the endocardium.

Its subcellular location is the cell membrane. The catalysed reaction is L-tyrosyl-[protein] + ATP = O-phospho-L-tyrosyl-[protein] + ADP + H(+). Transmembrane tyrosine-protein kinase. Required for the formation of facial lymphatic structures and brain lymphatic endothelial cells. Also required for embryonic ventral and dorsal migration of parachordal lymphoblasts along the arterial intersegmental vessel. Plays a role in the embryonic formation of the dorsal longitudinal anastomotic vessel. This chain is Tyrosine-protein kinase receptor Tie-1 (tie1), found in Danio rerio (Zebrafish).